A 402-amino-acid chain; its full sequence is Endo-polygalacturonase (402 aa).

A signal peptide spans 1 to 23; it reads MEYQSGKRVLSLSLGLIGLFSAS. D249 (proton donor) is an active-site residue. H277 is a catalytic residue.

The protein belongs to the glycosyl hydrolase 28 family. Monomer.

It localises to the secreted. It catalyses the reaction (1,4-alpha-D-galacturonosyl)n+m + H2O = (1,4-alpha-D-galacturonosyl)n + (1,4-alpha-D-galacturonosyl)m.. In terms of biological role, involved in maceration and soft-rotting of plant tissue. This Pectobacterium carotovorum subsp. carotovorum (Erwinia carotovora subsp. carotovora) protein is Endo-polygalacturonase (peh).